The sequence spans 122 residues: Sarcocystatin-A (122 aa).

A signal peptide spans 1–20; the sequence is MKYVLILCVITLATVAYAQP. Pyrrolidone carboxylic acid is present on Gln21. The Secondary area of contact motif lies at 67 to 71; sequence QVVSG.

Belongs to the cystatin family.

Functionally, selectively inhibits the activity of cysteine proteinase of hemocytes, protecting developing adult tissue in pupae from attack by the proteinase. This is Sarcocystatin-A from Sarcophaga peregrina (Flesh fly).